Here is a 121-residue protein sequence, read N- to C-terminus: Conopressin-conophysin (121 aa).

The signal sequence occupies residues Met1–Ala20. A disulfide bridge connects residues Cys21 and Cys26. Pro27 is subject to 4-hydroxyproline; partial; in Conopressin-ba1c. Gly29 carries the post-translational modification Glycine amide. Cystine bridges form between Cys43/Cys83, Cys46/Cys57, Cys51/Cys73, Cys58/Cys63, Cys90/Cys108, Cys102/Cys120, and Cys109/Cys114.

It belongs to the vasopressin/oxytocin family. In terms of tissue distribution, expressed by the venom duct.

The protein resides in the secreted. This chain is Conopressin-conophysin, found in Conus bayani (Bayan's cone).